Here is a 784-residue protein sequence, read N- to C-terminus: LPS-assembly protein LptD (784 aa).

The first 24 residues, 1–24, serve as a signal peptide directing secretion; it reads MKKRIPTLLATMIATALYSQQGLA. 2 cysteine pairs are disulfide-bonded: cysteine 31–cysteine 724 and cysteine 173–cysteine 725.

This sequence belongs to the LptD family. Component of the lipopolysaccharide transport and assembly complex. Interacts with LptE and LptA. Contains two intramolecular disulfide bonds.

It is found in the cell outer membrane. Functionally, together with LptE, is involved in the assembly of lipopolysaccharide (LPS) at the surface of the outer membrane. The polypeptide is LPS-assembly protein LptD (Shigella dysenteriae serotype 1 (strain Sd197)).